We begin with the raw amino-acid sequence, 522 residues long: MACELKEFLVKNDMYPMGDQVEKKRKAISKMTEYIQQWGKKIYIESAGVADDTDVKAATIYVYGSYRLNVYGNNSDIDACIVSNSTITRDDFYDGLYAELLNNPDVKELKQIPSKRSPHLSMIYLNIEFDLNFSRTAYTSLPDNLDILNENILKNMDELDTRAINGVRNTDIIDAFVPNHSEEAFRVMVRTIKLWTKKRGIYGYVYCFLNGISIEILVAQVISENYQLDNVRLLEKFFQVYSSWDWLRTPVMLGTNDDFNDKKKEGVIQILTPASPSENAAFSITKFSLEMIKRELKRGQEIVHEFSSEGVNDWAKLFKPRHLFCGYYIFIEFIVTSSSLEGLTTTIGKFESGLVNLMKGLSEIEEIIEANVIPNGFLDEENEKYFYYVGMNVKRDCPVDISTPLNSFLSIVNSGKDLIVDASIKKRSEIPTKFAHSVKRSITKSQEIKETSSQVPSSAITETFDIPTKPSIEQQLKAKEENSIPNEEKKEQLKKEMKQEANTIVKNSSTDDDFMKRFTRKN.

ATP-binding positions include 63–65 (YGS), 76–78 (DID), Asp130, Lys193, Tyr202, and 211–212 (GI). Mg(2+) is bound by residues Asp76, Asp78, and Asp130. Residues 475–522 (QLKAKEENSIPNEEKKEQLKKEMKQEANTIVKNSSTDDDFMKRFTRKN) are disordered. Basic and acidic residues predominate over residues 476–499 (LKAKEENSIPNEEKKEQLKKEMKQ).

The protein belongs to the poly(A) polymerase family. Mg(2+) serves as cofactor. The cofactor is Mn(2+).

The protein resides in the cytoplasm. It is found in the nucleus. The enzyme catalyses RNA(n) + ATP = RNA(n)-3'-adenine ribonucleotide + diphosphate. In terms of biological role, polymerase that creates the 3'-poly(A) tail of mRNA's. May acquire specificity through interaction with a cleavage and polyadenylation factor. The chain is Poly(A) polymerase from Entamoeba histolytica (strain ATCC 30459 / HM-1:IMSS / ABRM).